The primary structure comprises 336 residues: tRNA N6-adenosine threonylcarbamoyltransferase (336 aa).

Residues His-110 and His-114 each contribute to the Fe cation site. Substrate is bound by residues 133-137 (LVSGK), Asp-166, Gly-179, and Asn-271. Residue Asp-300 coordinates Fe cation.

Belongs to the KAE1 / TsaD family. It depends on Fe(2+) as a cofactor.

The protein resides in the cytoplasm. The catalysed reaction is L-threonylcarbamoyladenylate + adenosine(37) in tRNA = N(6)-L-threonylcarbamoyladenosine(37) in tRNA + AMP + H(+). Functionally, required for the formation of a threonylcarbamoyl group on adenosine at position 37 (t(6)A37) in tRNAs that read codons beginning with adenine. Is involved in the transfer of the threonylcarbamoyl moiety of threonylcarbamoyl-AMP (TC-AMP) to the N6 group of A37, together with TsaE and TsaB. TsaD likely plays a direct catalytic role in this reaction. In Buchnera aphidicola subsp. Acyrthosiphon pisum (strain 5A), this protein is tRNA N6-adenosine threonylcarbamoyltransferase.